The sequence spans 263 residues: Small ribosomal subunit protein eS4 (263 aa).

Residues Leu-42 to Asp-104 form the S4 RNA-binding domain.

The protein belongs to the eukaryotic ribosomal protein eS4 family.

The polypeptide is Small ribosomal subunit protein eS4 (RpS4) (Spodoptera frugiperda (Fall armyworm)).